The chain runs to 678 residues: DNA ligase (678 aa).

NAD(+) is bound by residues D47–D51, S96–L97, and E122. K124 serves as the catalytic N6-AMP-lysine intermediate. NAD(+) is bound by residues R145, E182, K300, and K324. The Zn(2+) site is built by C418, C421, C436, and C442. A BRCT domain is found at A602 to L678.

It belongs to the NAD-dependent DNA ligase family. LigA subfamily. Requires Mg(2+) as cofactor. The cofactor is Mn(2+).

It carries out the reaction NAD(+) + (deoxyribonucleotide)n-3'-hydroxyl + 5'-phospho-(deoxyribonucleotide)m = (deoxyribonucleotide)n+m + AMP + beta-nicotinamide D-nucleotide.. In terms of biological role, DNA ligase that catalyzes the formation of phosphodiester linkages between 5'-phosphoryl and 3'-hydroxyl groups in double-stranded DNA using NAD as a coenzyme and as the energy source for the reaction. It is essential for DNA replication and repair of damaged DNA. This chain is DNA ligase, found in Francisella tularensis subsp. holarctica (strain LVS).